We begin with the raw amino-acid sequence, 103 residues long: MQPNDITFFQRFQDDILAGRKTITIRDESESHFKTGDVLRVGRFEDDGYFCTIEVTATSTITLETLTEKHAEQENMTLTELIKVIADIYPGQTQFYVIEFKCL.

The ASCH domain maps to 6 to 101; the sequence is ITFFQRFQDD…QTQFYVIEFK (96 aa). The active-site Proton acceptor is the lysine 21. Threonine 24 functions as the Nucleophile in the catalytic mechanism. Residue glutamate 74 is the Proton donor of the active site.

Belongs to the N(4)-acetylcytidine amidohydrolase family.

The enzyme catalyses N(4)-acetylcytidine + H2O = cytidine + acetate + H(+). It catalyses the reaction N(4)-acetyl-2'-deoxycytidine + H2O = 2'-deoxycytidine + acetate + H(+). It carries out the reaction N(4)-acetylcytosine + H2O = cytosine + acetate + H(+). In terms of biological role, catalyzes the hydrolysis of N(4)-acetylcytidine (ac4C). The sequence is that of N(4)-acetylcytidine amidohydrolase (yqfB) from Escherichia coli (strain SE11).